Consider the following 508-residue polypeptide: MWELVALLLLTLAYLFWPKRRCPGAKYPKSLLSLPLVGSLPFLPRHGHMHNNFFKLQKKYGPIYSVRMGTKTTVIVGHHQLAKEVLIKKGKDFSGRPQMATLDIASNNRKGIAFADSGAHWQLHRRLAMATFALFKDGDQKLEKIICQEISTLCDMLATHNGQSIDISFPVFVAVTNVISLICFNTSYKNGDPELNVIQNYNEGIIDNLSKDSLVDLVPWLKIFPNKTLEKLKSHVKIRNDLLNKILENYKEKFRSDSITNMLDTLMQAKMNSDNGNAGPDQDSELLSDNHILTTIGDIFGAGVETTTSVVKWTLAFLLHNPQVKKKLYEEIDQNVGFSRTPTISDRNRLLLLEATIREVLRLRPVAPMLIPHKANVDSSIGEFAVDKGTEVIINLWALHHNEKEWHQPDQFMPERFLNPAGTQLISPSVSYLPFGAGPRSCIGEILARQELFLIMAWLLQRFDLEVPDDGQLPSLEGIPKVVFLIDSFKVKIKVRQAWREAQAEGST.

Asn202 is a binding site for substrate. Cys442 provides a ligand contact to heme.

This sequence belongs to the cytochrome P450 family. Heme is required as a cofactor. In terms of processing, phosphorylation is necessary for 17,20-lyase, but not for 17-alpha-hydroxylase activity.

The protein resides in the endoplasmic reticulum membrane. The protein localises to the microsome membrane. The enzyme catalyses a C21-steroid + reduced [NADPH--hemoprotein reductase] + O2 = a 17alpha-hydroxy-C21-steroid + oxidized [NADPH--hemoprotein reductase] + H2O + H(+). The catalysed reaction is progesterone + reduced [NADPH--hemoprotein reductase] + O2 = 17alpha-hydroxyprogesterone + oxidized [NADPH--hemoprotein reductase] + H2O + H(+). It catalyses the reaction pregnenolone + reduced [NADPH--hemoprotein reductase] + O2 = 17alpha-hydroxypregnenolone + oxidized [NADPH--hemoprotein reductase] + H2O + H(+). It carries out the reaction 17alpha-hydroxyprogesterone + reduced [NADPH--hemoprotein reductase] + O2 = androst-4-ene-3,17-dione + acetate + oxidized [NADPH--hemoprotein reductase] + H2O + 2 H(+). The enzyme catalyses 17alpha-hydroxyprogesterone + reduced [NADPH--hemoprotein reductase] + O2 = 16alpha,17alpha-dihydroxyprogesterone + oxidized [NADPH--hemoprotein reductase] + H2O + H(+). The catalysed reaction is 16alpha,17alpha-dihydroxyprogesterone + reduced [NADPH--hemoprotein reductase] + O2 = 6beta,16alpha,17alpha-trihydroxyprogesterone + oxidized [NADPH--hemoprotein reductase] + H2O + H(+). It catalyses the reaction 17alpha-hydroxypregnenolone + reduced [NADPH--hemoprotein reductase] + O2 = 3beta-hydroxyandrost-5-en-17-one + acetate + oxidized [NADPH--hemoprotein reductase] + H2O + 2 H(+). It carries out the reaction 16alpha,17alpha-dihydroxypregnenolone + reduced [NADPH--hemoprotein reductase] + O2 = 3beta,16alpha-dihydroxy-androst-5-en-17-one + acetate + oxidized [NADPH--hemoprotein reductase] + H2O + 2 H(+). The enzyme catalyses 3beta-hydroxyandrost-5-en-17-one + reduced [NADPH--hemoprotein reductase] + O2 = 3beta,16alpha-dihydroxy-androst-5-en-17-one + oxidized [NADPH--hemoprotein reductase] + H2O + H(+). The catalysed reaction is androst-4-ene-3,17-dione + reduced [NADPH--hemoprotein reductase] + O2 = 16alpha-hydroxyandrost-4-ene-3,17-dione + oxidized [NADPH--hemoprotein reductase] + H2O + H(+). Its pathway is steroid hormone biosynthesis. It participates in steroid biosynthesis; glucocorticoid biosynthesis. Regulated predominantly by intracellular cAMP levels. The 17,20-lyase activity is stimulated by cytochrome b5, which acts as an allosteric effector increasing the Vmax of the lyase activity. A cytochrome P450 monooxygenase involved in corticoid and androgen biosynthesis. Catalyzes 17-alpha hydroxylation of C21 steroids, which is common for both pathways. A second oxidative step, required only for androgen synthesis, involves an acyl-carbon cleavage. The 17-alpha hydroxy intermediates, as part of adrenal glucocorticoids biosynthesis pathway, are precursors of cortisol. Hydroxylates steroid hormones, pregnenolone and progesterone to form 17-alpha hydroxy metabolites, followed by the cleavage of the C17-C20 bond to form C19 steroids, dehydroepiandrosterone (DHEA) and androstenedione. Has 16-alpha hydroxylase activity. Catalyzes 16-alpha hydroxylation of 17-alpha hydroxy pregnenolone, followed by the cleavage of the C17-C20 bond to form 16-alpha-hydroxy DHEA. Also 16-alpha hydroxylates androgens, relevant for estriol synthesis. Mechanistically, uses molecular oxygen inserting one oxygen atom into a substrate, and reducing the second into a water molecule, with two electrons provided by NADPH via cytochrome P450 reductase (CPR; NADPH-ferrihemoprotein reductase). This Homo sapiens (Human) protein is Steroid 17-alpha-hydroxylase/17,20 lyase.